A 459-amino-acid polypeptide reads, in one-letter code: tRNA modification GTPase MnmE (459 aa).

Residues Arg-23, Glu-88, and Arg-127 each coordinate (6S)-5-formyl-5,6,7,8-tetrahydrofolate. In terms of domain architecture, TrmE-type G spans 223-381; it reads GLSVVIVGKP…IKNCIKELFF (159 aa). Asn-233 lines the K(+) pocket. GTP contacts are provided by residues 233–238, 252–258, and 277–280; these read NVGKSS, TDIPGTT, and DTAG. Ser-237 provides a ligand contact to Mg(2+). K(+) contacts are provided by Thr-252, Ile-254, and Thr-257. Mg(2+) is bound at residue Thr-258. Lys-459 provides a ligand contact to (6S)-5-formyl-5,6,7,8-tetrahydrofolate.

This sequence belongs to the TRAFAC class TrmE-Era-EngA-EngB-Septin-like GTPase superfamily. TrmE GTPase family. Homodimer. Heterotetramer of two MnmE and two MnmG subunits. The cofactor is K(+).

The protein localises to the cytoplasm. In terms of biological role, exhibits a very high intrinsic GTPase hydrolysis rate. Involved in the addition of a carboxymethylaminomethyl (cmnm) group at the wobble position (U34) of certain tRNAs, forming tRNA-cmnm(5)s(2)U34. The sequence is that of tRNA modification GTPase MnmE from Clostridium kluyveri (strain ATCC 8527 / DSM 555 / NBRC 12016 / NCIMB 10680 / K1).